Consider the following 235-residue polypeptide: tRNA (guanine-N(1)-)-methyltransferase (235 aa).

S-adenosyl-L-methionine-binding positions include G112 and 131 to 136; that span reads LGDFVL.

The protein belongs to the RNA methyltransferase TrmD family. Homodimer.

Its subcellular location is the cytoplasm. It carries out the reaction guanosine(37) in tRNA + S-adenosyl-L-methionine = N(1)-methylguanosine(37) in tRNA + S-adenosyl-L-homocysteine + H(+). Specifically methylates guanosine-37 in various tRNAs. The chain is tRNA (guanine-N(1)-)-methyltransferase from Synechococcus elongatus (strain ATCC 33912 / PCC 7942 / FACHB-805) (Anacystis nidulans R2).